Here is a 207-residue protein sequence, read N- to C-terminus: MKFIIARKVGMTRLWKDEKVVPVTVLKAGPCVVVQKKTVEKDGYNAIQLGFEEVNEKKLTKPMLGVFKKANVKPMRVLKEFRVENVDQYSVGQEITVAIFQEGDKIDITGWTKGRGYSGAMKRWNFQGGPKAHGAKFHRELGSVGQHTEPARIFKGKRMPGRYGNERVTILNSEVVTIDAQNNLLAVKGGVPGARGSLVIIRSAVKQ.

This sequence belongs to the universal ribosomal protein uL3 family. As to quaternary structure, part of the 50S ribosomal subunit. Forms a cluster with proteins L14 and L19.

In terms of biological role, one of the primary rRNA binding proteins, it binds directly near the 3'-end of the 23S rRNA, where it nucleates assembly of the 50S subunit. In Fervidobacterium nodosum (strain ATCC 35602 / DSM 5306 / Rt17-B1), this protein is Large ribosomal subunit protein uL3.